Consider the following 201-residue polypeptide: Imidazoleglycerol-phosphate dehydratase (201 aa).

It belongs to the imidazoleglycerol-phosphate dehydratase family.

The protein resides in the cytoplasm. The catalysed reaction is D-erythro-1-(imidazol-4-yl)glycerol 3-phosphate = 3-(imidazol-4-yl)-2-oxopropyl phosphate + H2O. The protein operates within amino-acid biosynthesis; L-histidine biosynthesis; L-histidine from 5-phospho-alpha-D-ribose 1-diphosphate: step 6/9. This Prochlorococcus marinus (strain AS9601) protein is Imidazoleglycerol-phosphate dehydratase.